A 943-amino-acid chain; its full sequence is AP-1 complex subunit beta-1 (943 aa).

The residue at position 318 (lysine 318) is an N6-acetyllysine. A 3'-nitrotyrosine modification is found at tyrosine 574. A disordered region spans residues 584–621 (GGRGVVHKSLPPRTASSESTESPETAPAGAPAGDQPDV). Low complexity predominate over residues 594–616 (PPRTASSESTESPETAPAGAPAG).

The protein belongs to the adaptor complexes large subunit family. In terms of assembly, adaptor protein complex 1 (AP-1) is a heterotetramer composed of two large adaptins (gamma-type subunit AP1G1 and beta-type subunit AP1B1), a medium adaptin (mu-type subunit AP1M1 or AP1M2) and a small adaptin (sigma-type subunit AP1S1 or AP1S2 or AP1S3). As to expression, widely expressed.

Its subcellular location is the cytoplasmic vesicle. It localises to the clathrin-coated vesicle membrane. The protein localises to the golgi apparatus. Its function is as follows. Subunit of clathrin-associated adaptor protein complex 1 that plays a role in protein sorting in the late-Golgi/trans-Golgi network (TGN) and/or endosomes. The AP complexes mediate both the recruitment of clathrin to membranes and the recognition of sorting signals within the cytosolic tails of transmembrane cargo molecules. This Mus musculus (Mouse) protein is AP-1 complex subunit beta-1 (Ap1b1).